The primary structure comprises 341 residues: Delta(1)-pyrroline-2-carboxylate reductase (341 aa).

The active-site Charge relay system is the S47. The active-site Proton donor is H48. Residue R52 coordinates substrate. 120-124 lines the NADP(+) pocket; it reads HFSAL. Substrate is bound at residue T160. 178-180 is an NADP(+) binding site; it reads DFA. 186–187 lines the substrate pocket; the sequence is RG. Residue E188 is the Charge relay system of the active site. NADP(+) is bound by residues 229 to 230 and 305 to 311; these read HK and RLPSERR.

Belongs to the LDH2/MDH2 oxidoreductase family. As to quaternary structure, homodimer.

The catalysed reaction is L-proline + NAD(+) = 1-pyrroline-2-carboxylate + NADH + H(+). It catalyses the reaction L-proline + NADP(+) = 1-pyrroline-2-carboxylate + NADPH + H(+). In terms of biological role, catalyzes the reduction of Delta(1)-pyrroline-2-carboxylate (Pyr2C) to L-proline, using NADPH as the electron donor. Is likely involved in a degradation pathway that converts cis- and trans-3-hydroxy-L-proline (c3LHyp and t3LHyp) to L-proline, which would allow S.novella to grow on c3LHyp or t3LHyp as a sole carbon source. In Ancylobacter novellus (strain ATCC 8093 / DSM 506 / JCM 20403 / CCM 1077 / IAM 12100 / NBRC 12443 / NCIMB 10456) (Starkeya novella), this protein is Delta(1)-pyrroline-2-carboxylate reductase.